Reading from the N-terminus, the 609-residue chain is Phosphoenolpyruvate carboxykinase [GTP] (609 aa).

Substrate-binding positions include R81 and 220–222 (YGG). K229 and H249 together coordinate Mn(2+). S271 contributes to the substrate binding site. 272-277 (ACGKTN) serves as a coordination point for GTP. Residue C273 is part of the active site. D296 contributes to the Mn(2+) binding site. 387-389 (NSR) lines the substrate pocket. GTP-binding positions include R389, R420, and 515-518 (FGEN).

This sequence belongs to the phosphoenolpyruvate carboxykinase [GTP] family. Monomer. Mn(2+) serves as cofactor.

It localises to the cytoplasm. The enzyme catalyses oxaloacetate + GTP = phosphoenolpyruvate + GDP + CO2. It functions in the pathway carbohydrate biosynthesis; gluconeogenesis. Its function is as follows. Catalyzes the conversion of oxaloacetate (OAA) to phosphoenolpyruvate (PEP), the rate-limiting step in the metabolic pathway that produces glucose from lactate and other precursors derived from the citric acid cycle. The protein is Phosphoenolpyruvate carboxykinase [GTP] of Mycolicibacterium paratuberculosis (strain ATCC BAA-968 / K-10) (Mycobacterium paratuberculosis).